Reading from the N-terminus, the 253-residue chain is MLKFVILLSAVACALGGTIPEGLLPQLDGRIVGGTATTISSFPWQISLQRSGSHSCGGSIYTDRVIVTAAHCLQSVSTSSLQIRAGSSYWNSGGVTVKVSSFKNHEGYSARTMVNDIAVIRLSSSLSFSSTIKSISLASSNPPNGAAASVSGWGTQSSGSNSIPSQLQYVNVNIVSQSRCASSTYGYGSDIRDTMICAAASGKDACQGDSGGPLVSGGVLVGVVSWGQGCAYSNYPGVYASVADLRAWVVRNA.

The N-terminal stretch at 1–22 (MLKFVILLSAVACALGGTIPEG) is a signal peptide. Residues 23-30 (LLPQLDGR) constitute a propeptide, activation peptide. Residues 31-253 (IVGGTATTIS…DLRAWVVRNA (223 aa)) form the Peptidase S1 domain. The cysteines at positions 56 and 72 are disulfide-linked. Catalysis depends on charge relay system residues His-71 and Asp-116. 2 cysteine pairs are disulfide-bonded: Cys-180-Cys-197 and Cys-206-Cys-230. Ser-210 functions as the Charge relay system in the catalytic mechanism.

The protein belongs to the peptidase S1 family.

The protein resides in the secreted. It localises to the extracellular space. The catalysed reaction is Preferential cleavage: Arg-|-Xaa, Lys-|-Xaa.. This is Trypsin delta from Drosophila erecta (Fruit fly).